A 271-amino-acid chain; its full sequence is Ferric vulnibactin reductase VuuB (271 aa).

In terms of domain architecture, FAD-binding FR-type spans 8–131 (VYPMLLDFVR…IGPAGPDPLI (124 aa)).

Belongs to the SIP oxidoreductase family. As to quaternary structure, monomer. The cofactor is FAD.

It localises to the cytoplasm. The enzyme catalyses 2 a Fe(II)-siderophore + NAD(+) + H(+) = 2 a Fe(III)-siderophore + NADH. Its function is as follows. Ferric-siderophore reductase involved in iron removal from the siderophores after their transport into the cell. Acts as a major ferric-vulnibactin reductase catalyzing the reduction of Fe(3+)-vulnibactin, a catecholate siderophore synthesized by V.vulnificus. The polypeptide is Ferric vulnibactin reductase VuuB (Vibrio vulnificus (strain CMCP6)).